Consider the following 256-residue polypeptide: 6-carboxyhexanoate--CoA ligase (256 aa).

This sequence belongs to the BioW family. As to quaternary structure, homodimer. Mg(2+) serves as cofactor.

It catalyses the reaction heptanedioate + ATP + CoA = 6-carboxyhexanoyl-CoA + AMP + diphosphate. The protein operates within metabolic intermediate metabolism; pimeloyl-CoA biosynthesis; pimeloyl-CoA from pimelate: step 1/1. Catalyzes the transformation of pimelate into pimeloyl-CoA with concomitant hydrolysis of ATP to AMP. The chain is 6-carboxyhexanoate--CoA ligase from Bacillus amyloliquefaciens (strain ATCC 23350 / DSM 7 / BCRC 11601 / CCUG 28519 / NBRC 15535 / NRRL B-14393 / F).